The primary structure comprises 274 residues: Proto-oncogene FRAT1 (274 aa).

4 disordered regions span residues 1-24, 55-107, 132-194, and 232-274; these read MPCRREEEEEAGDEAEGEEDDDSF, AHDR…PGAV, GASA…DDPH, and GPLS…VPGS. The span at 7–23 shows a compositional bias: acidic residues; sequence EEEEAGDEAEGEEDDDS. The interval 191–214 is involved in GSK-3 binding; that stretch reads DDPHRLLQQLVLSGNLIKEAVRRL. Residues serine 243 and serine 246 each carry the phosphoserine modification.

Belongs to the GSK-3-binding protein family. As to quaternary structure, binds DVL1. Binds GSK-3 and prevent GSK-3-dependent phosphorylation. Post-translationally, phosphorylated. Highly expressed in testis. Lower level of expression in spleen, thymus and brain.

Its subcellular location is the cytoplasm. In terms of biological role, positively regulates the Wnt signaling pathway by stabilizing beta-catenin through the association with GSK-3. May play a role in tumor progression and collaborate with PIM1 and MYC in lymphomagenesis. This chain is Proto-oncogene FRAT1 (Frat1), found in Mus musculus (Mouse).